Here is a 355-residue protein sequence, read N- to C-terminus: S-adenosylmethionine:tRNA ribosyltransferase-isomerase (355 aa).

This sequence belongs to the QueA family. In terms of assembly, monomer.

It is found in the cytoplasm. The catalysed reaction is 7-aminomethyl-7-carbaguanosine(34) in tRNA + S-adenosyl-L-methionine = epoxyqueuosine(34) in tRNA + adenine + L-methionine + 2 H(+). The protein operates within tRNA modification; tRNA-queuosine biosynthesis. Its function is as follows. Transfers and isomerizes the ribose moiety from AdoMet to the 7-aminomethyl group of 7-deazaguanine (preQ1-tRNA) to give epoxyqueuosine (oQ-tRNA). This Burkholderia cenocepacia (strain ATCC BAA-245 / DSM 16553 / LMG 16656 / NCTC 13227 / J2315 / CF5610) (Burkholderia cepacia (strain J2315)) protein is S-adenosylmethionine:tRNA ribosyltransferase-isomerase.